The primary structure comprises 135 residues: MTMTDPIADMLTRVRNANRAYHDRVVMPHSKIKTHIAEILQQEGYILGWHVEDPAEGAVGRTLIVDLKYGPNRERSIAGVKRISKPGLRVYAKSTNLPKVLGGLGVAIISTSSGLLTDRQAGKRRVGGEVLAYVW.

The protein belongs to the universal ribosomal protein uS8 family. Part of the 30S ribosomal subunit. Contacts proteins S5 and S12.

One of the primary rRNA binding proteins, it binds directly to 16S rRNA central domain where it helps coordinate assembly of the platform of the 30S subunit. This is Small ribosomal subunit protein uS8 from Parafrankia sp. (strain EAN1pec).